A 179-amino-acid chain; its full sequence is CASP-like protein 5A2 (179 aa).

The Cytoplasmic segment spans residues 1–54 (MEATSHPAVHPVAVPPQFQGAGPPAIQMKDFPGSPGTAGGLALRFTQFGFSLIS). A run of 2 helical transmembrane segments spans residues 55–75 (LCIMVSIAGFSSVTAFCFLVA) and 76–96 (TMVFQCIWSLCLGALDIYALL). Topologically, residues 97-114 (TQRSFRNPLIVSLFVVGD) are cytoplasmic. The chain crosses the membrane as a helical span at residues 115 to 135 (WVTSTMTFAGACAAAGITVLI). Over 136–154 (DNDLEQCGPNHCGRFEAAA) the chain is Extracellular. The chain crosses the membrane as a helical span at residues 155-175 (AMAFMSWTATTLSFCLSFWLL). At 176–179 (ASCR) the chain is on the cytoplasmic side.

Belongs to the Casparian strip membrane proteins (CASP) family. Homodimer and heterodimers.

The protein localises to the cell membrane. This is CASP-like protein 5A2 from Physcomitrium patens (Spreading-leaved earth moss).